A 535-amino-acid polypeptide reads, in one-letter code: Calcium-dependent protein kinase 1 (535 aa).

The tract at residues 1-34 (MGCNQSKSANDVRGNKVNNVNSKKKNNKREDIND) is disordered. A lipid anchor (N-myristoyl glycine) is attached at glycine 2. Residue cysteine 3 is the site of S-palmitoyl cysteine attachment. The Protein kinase domain occupies 57-324 (YFKVRKLGSG…AEEALNSRWI (268 aa)). ATP is bound by residues 63–71 (LGSGAYGEV) and lysine 86. Serine 65 is subject to Phosphoserine. Phosphoserine is present on serine 117. Aspartate 190 acts as the Proton acceptor in catalysis. Phosphoserine is present on residues serine 216 and serine 219. Threonine 230 is modified (phosphothreonine). Residue serine 334 is modified to Phosphoserine. A J domain autoinhibitory motif motif is present at residues 345–352 (NMRKFEGS). A j domain region spans residues 345 to 363 (NMRKFEGSQKLAQAAILFI). The short motif at 353-363 (QKLAQAAILFI) is the J domain interacts with the EF-hand domains element. EF-hand domains follow at residues 371–406 (EERK…LRNF), 415–450 (NVEE…KQIL), 451–486 (FSEE…GFYF), and 497–532 (VSEK…ICDN). Ca(2+) contacts are provided by aspartate 384, asparagine 386, aspartate 388, glutamine 390, glutamate 395, aspartate 428, aspartate 430, asparagine 432, tyrosine 434, glutamate 439, aspartate 464, aspartate 466, serine 468, lysine 470, glutamate 475, aspartate 510, asparagine 512, aspartate 514, methionine 516, and glutamate 521.

This sequence belongs to the protein kinase superfamily. Ser/Thr protein kinase family. CDPK subfamily. As to quaternary structure, monomer. Mg(2+) serves as cofactor. Myristoylated. Myristoylation and palmitoylation are required for the localization to the parasitophorous vacuole membrane. Post-translationally, palmitoylated. Palmitoylation increases in merozoites in response to low level of extracellular K(+) in the host blood. Myristoylation and palmitoylation are required for the localization to the parasitophorous vacuole membrane. In terms of processing, phosphorylation at Thr-230 may regulate CDPK1 kinase activity. Phosphorylation increases in response to an increase in intracellular Ca(2+) levels. Autophosphorylated in vitro. Autophosphorylation does not affect membrane localization in vitro.

The protein localises to the membrane. It is found in the cell membrane. It localises to the parasitophorous vacuole membrane. Its subcellular location is the cytoplasm. The protein resides in the cell projection. The protein localises to the cilium. It is found in the flagellum. It localises to the host cell membrane. It catalyses the reaction L-seryl-[protein] + ATP = O-phospho-L-seryl-[protein] + ADP + H(+). It carries out the reaction L-threonyl-[protein] + ATP = O-phospho-L-threonyl-[protein] + ADP + H(+). With respect to regulation, activated by calcium. Upon calcium binding to the EF-hand domains, the C-terminus of the junction domain (J domain) undergoes a conformational change which results in the dissociation of the pseudo-substrate inhibitory motif from the catalytic domain. This, in turn may facilitate the autophosphorylation of the activation loop at Thr-230, which leads to the kinase activation. Calcium-dependent protein kinase which acts as a sensor and effector of intracellular Ca(2+) levels probably in part downstream of cGMP-activated PKG kinase. During the liver stage, involved in sporozoite motility and thus in sporozoite invasion of host hepatocytes, probably together with CDPK4 and CDPK5. In the mosquito midgut and during the last stage of male gamete exflagellation, may play a role in the rupture of the host erythrocyte membrane. In the mosquito midgut, required for the differentiation of the zygote into the ookinete by promoting the translational activation of a subset of repressed mRNAs; these mRNAs are kept repressed in the zygote by the DOZI- or CITH-containing mRNP complexes. Dispensable during the asexual blood stage. The polypeptide is Calcium-dependent protein kinase 1 (Plasmodium yoelii yoelii).